Consider the following 255-residue polypeptide: Tabinhibitin 1 (255 aa).

The first 23 residues, 1-23 (MTSILVSRFLIAALVLQYATSDA), serve as a signal peptide directing secretion. The 145-residue stretch at 67–211 (LSKINDVRDH…KARALLTCNF (145 aa)) folds into the SCP domain.

This sequence belongs to the CRISP family. As to expression, expressed in salivary glands.

Its subcellular location is the secreted. In terms of biological role, inhibits platelet aggregation induced by all agonists tested. May act by competing with fibrinogen for binding to glycoprotein IIb/IIIa (ITGA2B/ITGB3). In Tabanus yao (Horsefly), this protein is Tabinhibitin 1.